Consider the following 468-residue polypeptide: 6-phospho-beta-galactosidase (468 aa).

5 residues coordinate D-galactose 6-phosphate: Q19, H116, N159, E160, and N297. The active-site Proton donor is E160. The Nucleophile role is filled by E375. D-galactose 6-phosphate-binding residues include S428, W429, K435, and Y437.

It belongs to the glycosyl hydrolase 1 family.

It catalyses the reaction a 6-phospho-beta-D-galactoside + H2O = D-galactose 6-phosphate + an alcohol. The protein operates within carbohydrate metabolism; lactose degradation; D-galactose 6-phosphate and beta-D-glucose from lactose 6-phosphate: step 1/1. The sequence is that of 6-phospho-beta-galactosidase from Streptococcus agalactiae serotype III (strain NEM316).